A 1442-amino-acid chain; its full sequence is DNA polymerase III PolC-type (1442 aa).

Positions 409–568 constitute an Exonuclease domain; it reads YVIFDIETTG…YDAIVLADVF (160 aa).

This sequence belongs to the DNA polymerase type-C family. PolC subfamily.

Its subcellular location is the cytoplasm. The enzyme catalyses DNA(n) + a 2'-deoxyribonucleoside 5'-triphosphate = DNA(n+1) + diphosphate. Its function is as follows. Required for replicative DNA synthesis. This DNA polymerase also exhibits 3' to 5' exonuclease activity. The chain is DNA polymerase III PolC-type from Ureaplasma parvum serovar 3 (strain ATCC 700970).